The primary structure comprises 362 residues: MTEALISAALNGTQPELLAGGWAAGNASTKCSLTKTGFQFYYLPTVYILVFITGFLGNSVAIWMFVFHMRPWSGISVYMFNLALADFLYVLTLPALIFYYFNKTDWIFGDVMCKLQRFIFHVNLYGSILFLTCISVHRYTGVVHPLKSLGRLKKKNAVYVSSLVWALVVAVIAPILFYSGTGVRRNKTITCYDTTADEYLRSYFVYSMCTTVFMFCIPFIVILGCYGLIVKALIYKDLDNSPLRRKSIYLVIIVLTVFAVSYLPFHVMKTLNLRARLDFQTPQMCAFNDKVYATYQVTRGLASLNSCVDPILYFLAGDTFRRRLSRATRKSSRRSEPNVQSKSEEMTLNILTEYKQNGDTSL.

At 1-40 (MTEALISAALNGTQPELLAGGWAAGNASTKCSLTKTGFQF) the chain is on the extracellular side. N-linked (GlcNAc...) asparagine glycans are attached at residues N11 and N26. 2 disulfide bridges follow: C31–C285 and C113–C191. K35 is a binding site for ADP. A helical transmembrane segment spans residues 41-63 (YYLPTVYILVFITGFLGNSVAIW). The Cytoplasmic portion of the chain corresponds to 64 to 76 (MFVFHMRPWSGIS). A helical membrane pass occupies residues 77 to 98 (VYMFNLALADFLYVLTLPALIF). Topologically, residues 99 to 114 (YYFNKTDWIFGDVMCK) are extracellular. N102 carries N-linked (GlcNAc...) asparagine glycosylation. A helical membrane pass occupies residues 115–136 (LQRFIFHVNLYGSILFLTCISV). At 137 to 155 (HRYTGVVHPLKSLGRLKKK) the chain is on the cytoplasmic side. A helical membrane pass occupies residues 156 to 177 (NAVYVSSLVWALVVAVIAPILF). Topologically, residues 178–203 (YSGTGVRRNKTITCYDTTADEYLRSY) are extracellular. N186 carries an N-linked (GlcNAc...) asparagine glycan. Residue 192–194 (YDT) coordinates ADP. A helical membrane pass occupies residues 204 to 226 (FVYSMCTTVFMFCIPFIVILGCY). The Cytoplasmic segment spans residues 227–249 (GLIVKALIYKDLDNSPLRRKSIY). Residues 250–273 (LVIIVLTVFAVSYLPFHVMKTLNL) form a helical membrane-spanning segment. ADP is bound by residues 272 to 276 (NLRAR), 292 to 295 (YATY), and R299. Residues 274 to 292 (RARLDFQTPQMCAFNDKVY) are Extracellular-facing. Residues 293-314 (ATYQVTRGLASLNSCVDPILYF) traverse the membrane as a helical segment. At 315-362 (LAGDTFRRRLSRATRKSSRRSEPNVQSKSEEMTLNILTEYKQNGDTSL) the chain is on the cytoplasmic side.

It belongs to the G-protein coupled receptor 1 family. In terms of tissue distribution, mainly found in blood, brain, and lung. To a lesser extent in stomach, gut and skeletal muscle.

It is found in the cell membrane. Receptor for extracellular adenine nucleotides such as ADP. In platelets, binding to ADP leads to mobilization of intracellular calcium ions via activation of phospholipase C, a change in platelet shape, and ultimately platelet aggregation. This chain is P2Y purinoceptor 1 (P2RY1), found in Meleagris gallopavo (Wild turkey).